A 152-amino-acid polypeptide reads, in one-letter code: MSTPARKRLMRDFKRLQQDPPAGISGAPHDNNITLWNAVIFGPDDTPWDGGTFKLTLQFTEDYPNKPPTVRFVSRMFHPNIYADGSICLDILQNQWSPIYDVAAILTSIQSLLCDPNPNSPANSEAARMYSENKREYNRKVREVVEQSWTAD.

Positions P4–T150 constitute a UBC core domain. C88 (glycyl thioester intermediate) is an active-site residue.

The protein belongs to the ubiquitin-conjugating enzyme family.

It catalyses the reaction S-ubiquitinyl-[E1 ubiquitin-activating enzyme]-L-cysteine + [E2 ubiquitin-conjugating enzyme]-L-cysteine = [E1 ubiquitin-activating enzyme]-L-cysteine + S-ubiquitinyl-[E2 ubiquitin-conjugating enzyme]-L-cysteine.. The protein operates within protein modification; protein ubiquitination. Its function is as follows. Catalyzes the covalent attachment of ubiquitin to other proteins. This is Ubiquitin-conjugating enzyme E2 2 (UBC2) from Triticum aestivum (Wheat).